Reading from the N-terminus, the 413-residue chain is Monacolin J acid methylbutanoyltransferase (413 aa).

Arg-73 serves as a coordination point for monacolin J. The Acyl-ester intermediate role is filled by Ser-76. The monacolin J site is built by Arg-173, Tyr-188, and Tyr-258. 2-methylbutanoate is bound at residue Gly-366. Monacolin J is bound by residues Glu-388 and Trp-390.

It belongs to the class-A beta-lactamase family. Interacts with LovF.

It catalyses the reaction monacolin J carboxylate + (S)-2-methylbutanoyl-[2-methylbutanoate polyketide synthase] = lovastatin carboxylate + holo-[2-methylbutanoate polyketide synthase]. It functions in the pathway polyketide biosynthesis; lovastatin biosynthesis. Its function is as follows. Monacolin J acid methylbutanoyltransferase; part of the gene cluster that mediates the biosynthesis of lovastatin (also known as mevinolin, mevacor or monacolin K), a hypolipidemic inhibitor of (3S)-hydroxymethylglutaryl-coenzyme A (HMG-CoA) reductase (HMGR). The first step in the biosynthesis of lovastatin is the production of dihydromonacolin L acid by the lovastatin nonaketide synthase lovB and the trans-acting enoyl reductase lovC via condensation of one acetyl-CoA unit and 8 malonyl-CoA units. Dihydromonacolin L acid is released from lovB by the thioesterase lovG. Next, dihydromonacolin L acid is oxidized by the dihydromonacolin L monooxygenase lovA twice to form monacolin J acid. The 2-methylbutyrate moiety of lovastatin is synthesized by the lovastatin diketide synthase lovF via condensation of one acetyl-CoA unit and one malonyl-CoA unit. Finally, the covalent attachment of this moiety to monacolin J acid is catalyzed by the transesterase lovD to yield lovastatin. LovD has broad substrate specificity and can also convert monacolin J to simvastatin using alpha-dimethylbutanoyl-S-methyl-3-mercaptopropionate (DMB-S-MMP) as the thioester acyl donor, and can also catalyze the reverse reaction and function as hydrolase in vitro. LovD has much higher activity with LovF-bound 2-methylbutanoate than with free diketide substrates. The protein is Monacolin J acid methylbutanoyltransferase of Aspergillus terreus (strain NIH 2624 / FGSC A1156).